We begin with the raw amino-acid sequence, 99 residues long: Large ribosomal subunit protein eL30 (99 aa).

It belongs to the eukaryotic ribosomal protein eL30 family. Part of the 50S ribosomal subunit.

This is Large ribosomal subunit protein eL30 from Pyrococcus furiosus (strain ATCC 43587 / DSM 3638 / JCM 8422 / Vc1).